A 120-amino-acid chain; its full sequence is Ribonuclease P protein component (120 aa).

The protein belongs to the RnpA family. As to quaternary structure, consists of a catalytic RNA component (M1 or rnpB) and a protein subunit.

The catalysed reaction is Endonucleolytic cleavage of RNA, removing 5'-extranucleotides from tRNA precursor.. Its function is as follows. RNaseP catalyzes the removal of the 5'-leader sequence from pre-tRNA to produce the mature 5'-terminus. It can also cleave other RNA substrates such as 4.5S RNA. The protein component plays an auxiliary but essential role in vivo by binding to the 5'-leader sequence and broadening the substrate specificity of the ribozyme. The sequence is that of Ribonuclease P protein component from Thioalkalivibrio sulfidiphilus (strain HL-EbGR7).